Reading from the N-terminus, the 904-residue chain is Protein translocase subunit SecA (904 aa).

ATP is bound by residues glutamine 89, 107–111 (GEGKT), and aspartate 496. A disordered region spans residues 870-904 (GGFQELSSGTPSPTVTVTTSSGGGTERKTSRRRKR). A compositionally biased stretch (low complexity) spans 876 to 889 (SSGTPSPTVTVTTS).

Belongs to the SecA family. Monomer and homodimer. Part of the essential Sec protein translocation apparatus which comprises SecA, SecYEG and auxiliary proteins SecDF. Other proteins may also be involved.

Its subcellular location is the cell inner membrane. It localises to the cytoplasm. The catalysed reaction is ATP + H2O + cellular proteinSide 1 = ADP + phosphate + cellular proteinSide 2.. In terms of biological role, part of the Sec protein translocase complex. Interacts with the SecYEG preprotein conducting channel. Has a central role in coupling the hydrolysis of ATP to the transfer of proteins into and across the cell membrane, serving as an ATP-driven molecular motor driving the stepwise translocation of polypeptide chains across the membrane. This Leptospira borgpetersenii serovar Hardjo-bovis (strain JB197) protein is Protein translocase subunit SecA.